The sequence spans 558 residues: PE cleavage protein A (558 aa).

A PE domain is found at 1-93; that stretch reads MSFLVVVPEF…SGSYAAAEAT (93 aa). Residue Asp297 is part of the active site.

Belongs to the mycobacterial PE family. PGRS subfamily. Undergoes auto-proteolytic processing.

It is found in the secreted. The protein localises to the cell surface. Functionally, aspartic protease that processes the lipase LipY and other PE_PGRS proteins. Can also cleave itself. This is PE cleavage protein A from Mycobacterium tuberculosis (strain CDC 1551 / Oshkosh).